We begin with the raw amino-acid sequence, 81 residues long: Xenopsin peptides (81 aa).

The N-terminal stretch at 1 to 20 is a signal peptide; that stretch reads MYKGIFLCVLLAVICANSLA. The propeptide occupies 21–37; the sequence is TPSSDADEDNDEVERYV. Positions 65–73 are cleaved as a propeptide — removed in mature form by a dipeptidylpeptidase; it reads EAMLRSAEA.

Belongs to the gastrin/cholecystokinin family. Magainin subfamily. In terms of tissue distribution, XPF is synthesized in the stomach and stored in a novel granular multinucleated cell in the gastric mucosa, it is stored as active, processed peptides in large granules within the granular gland secretions of the skin.

The protein resides in the secreted. Xenopsin is a neurotensin-like octapeptide. Its function is as follows. XPF has antimicrobial activity. This Xenopus laevis (African clawed frog) protein is Xenopsin peptides.